A 369-amino-acid polypeptide reads, in one-letter code: MKSRAAVAFAPGKPLEIVEIDVAPPKKGEVLIKVTHTGVCHTDAFTLSGDDPEGVFPVVLGHEGAGVVVEVGEGVTSVKPGDHVIPLYTEXCGECEFCRSGKTNLCVAVRETQGKGLMPDGTTRFSYNGQPLYHYMGCSTFSEYTVVAEVSLAKINPEANHEHVCLLGCGVTTGIGAVHNTAKVQPGDSVAVFGLGAIGLAVVQGARQAKAGRIIAIDTNPKKFELARRFGATDCINPNDYDKPIKDVLLDINKWGIDHTFECIGNVNVMRAALESAHRGWGQSVIIGVAGSGQEISTRPFQLVTGRVWKGSAFGGVKGRSQLPGMVEDAMKGDIDLEPFVTHTMSLDEINDAFDLMHEGKSIRTVIRY.

Residues Cys40, His62, Cys92, Cys95, Cys98, Cys106, and Cys169 each contribute to the Zn(2+) site.

It belongs to the zinc-containing alcohol dehydrogenase family. Class-III subfamily. As to quaternary structure, homodimer. Zn(2+) serves as cofactor.

The protein resides in the cytoplasm. It carries out the reaction S-(hydroxymethyl)glutathione + NADP(+) = S-formylglutathione + NADPH + H(+). The enzyme catalyses S-(hydroxymethyl)glutathione + NAD(+) = S-formylglutathione + NADH + H(+). It catalyses the reaction a primary alcohol + NAD(+) = an aldehyde + NADH + H(+). The catalysed reaction is a secondary alcohol + NAD(+) = a ketone + NADH + H(+). It carries out the reaction S-nitrosoglutathione + NADH + H(+) = S-(hydroxysulfenamide)glutathione + NAD(+). Functionally, has high formaldehyde dehydrogenase activity in the presence of glutathione and catalyzes the oxidation of normal alcohols in a reaction that is not GSH-dependent. In addition, hemithiolacetals other than those formed from GSH, including omega-thiol fatty acids, also are substrates. Also acts as a S-nitroso-glutathione reductase by catalyzing the NADH-dependent reduction of S-nitrosoglutathione. This is S-(hydroxymethyl)glutathione dehydrogenase (frmA) from Escherichia coli O6:H1 (strain CFT073 / ATCC 700928 / UPEC).